A 105-amino-acid chain; its full sequence is Large ribosomal subunit protein uL23 (105 aa).

Belongs to the universal ribosomal protein uL23 family. Part of the 50S ribosomal subunit. Contacts protein L29, and trigger factor when it is bound to the ribosome.

In terms of biological role, one of the early assembly proteins it binds 23S rRNA. One of the proteins that surrounds the polypeptide exit tunnel on the outside of the ribosome. Forms the main docking site for trigger factor binding to the ribosome. The chain is Large ribosomal subunit protein uL23 from Janthinobacterium sp. (strain Marseille) (Minibacterium massiliensis).